A 126-amino-acid polypeptide reads, in one-letter code: Aspartate 1-decarboxylase (126 aa).

Serine 25 functions as the Schiff-base intermediate with substrate; via pyruvic acid in the catalytic mechanism. Serine 25 bears the Pyruvic acid (Ser) mark. Threonine 57 is a substrate binding site. Catalysis depends on tyrosine 58, which acts as the Proton donor. Residue 73–75 (GAA) coordinates substrate.

Belongs to the PanD family. As to quaternary structure, heterooctamer of four alpha and four beta subunits. Requires pyruvate as cofactor. Is synthesized initially as an inactive proenzyme, which is activated by self-cleavage at a specific serine bond to produce a beta-subunit with a hydroxyl group at its C-terminus and an alpha-subunit with a pyruvoyl group at its N-terminus.

It localises to the cytoplasm. It catalyses the reaction L-aspartate + H(+) = beta-alanine + CO2. It functions in the pathway cofactor biosynthesis; (R)-pantothenate biosynthesis; beta-alanine from L-aspartate: step 1/1. In terms of biological role, catalyzes the pyruvoyl-dependent decarboxylation of aspartate to produce beta-alanine. The chain is Aspartate 1-decarboxylase from Pectobacterium carotovorum subsp. carotovorum (strain PC1).